Consider the following 466-residue polypeptide: UDP-N-acetylmuramate--L-alanine ligase (466 aa).

Residue 114 to 120 (GTHGKTT) coordinates ATP.

The protein belongs to the MurCDEF family.

It is found in the cytoplasm. It catalyses the reaction UDP-N-acetyl-alpha-D-muramate + L-alanine + ATP = UDP-N-acetyl-alpha-D-muramoyl-L-alanine + ADP + phosphate + H(+). It functions in the pathway cell wall biogenesis; peptidoglycan biosynthesis. Its function is as follows. Cell wall formation. This is UDP-N-acetylmuramate--L-alanine ligase from Mesorhizobium japonicum (strain LMG 29417 / CECT 9101 / MAFF 303099) (Mesorhizobium loti (strain MAFF 303099)).